The following is a 446-amino-acid chain: Argininosuccinate synthase (446 aa).

ATP is bound by residues 17–25 (AFSGGLDTS) and A43. Y99 is a binding site for L-citrulline. G129 and T131 together coordinate ATP. L-aspartate contacts are provided by T131, N135, and D136. N135 contacts L-citrulline. ATP is bound at residue D136. Residues R139 and S192 each coordinate L-citrulline. D194 provides a ligand contact to ATP. Residues T201, E203, and E280 each coordinate L-citrulline.

Belongs to the argininosuccinate synthase family. Type 2 subfamily. In terms of assembly, homotetramer.

The protein resides in the cytoplasm. The enzyme catalyses L-citrulline + L-aspartate + ATP = 2-(N(omega)-L-arginino)succinate + AMP + diphosphate + H(+). The protein operates within amino-acid biosynthesis; L-arginine biosynthesis; L-arginine from L-ornithine and carbamoyl phosphate: step 2/3. This chain is Argininosuccinate synthase, found in Burkholderia thailandensis (strain ATCC 700388 / DSM 13276 / CCUG 48851 / CIP 106301 / E264).